The chain runs to 373 residues: StAR-related lipid transfer protein 7, mitochondrial (373 aa).

The N-terminal 61 residues, 1-61, are a transit peptide targeting the mitochondrion; sequence MFPRRPPATL…YSESSRCALL (61 aa). A coiled-coil region spans residues 89–114; it reads DEERIQEEELQRSINEMKRLEEMSNI. The START domain occupies 115–330; sequence FQSSGVENYP…LHMATLKAKN (216 aa). 2 disordered regions span residues 118-141 and 347-373; these read SGVENYPPEPKSPAGGNEKSKDKE and SSEAKATAPSPERKNEGSCGPARIEYA.

Post-translationally, proteolytically cleaved by PARL. In terms of tissue distribution, expressed in epithelial cells of airways, peripheral bronchioles and alveoli, as well as in the basal cell layer of the epidermis (at protein level).

It localises to the mitochondrion. May play a protective role in mucosal tissues by preventing exaggerated allergic responses. In Mus musculus (Mouse), this protein is StAR-related lipid transfer protein 7, mitochondrial (Stard7).